The primary structure comprises 487 residues: GTPase Der (487 aa).

EngA-type G domains lie at 5–169 (PKLA…SREI) and 178–351 (IKVA…ANSQ). Residues 11–18 (GRPNVGKS), 58–62 (DTGGI), 121–124 (NKID), 184–191 (GRANVGKS), 231–235 (DTAGI), and 296–299 (NKWD) contribute to the GTP site. In terms of domain architecture, KH-like spans 352-439 (KRITTHQLNK…IHLKGKTKKD (88 aa)). The disordered stretch occupies residues 441 to 466 (PVSSLSLTRKQTKSTDQENNEYDELY).

The protein belongs to the TRAFAC class TrmE-Era-EngA-EngB-Septin-like GTPase superfamily. EngA (Der) GTPase family. Associates with the 50S ribosomal subunit.

GTPase that plays an essential role in the late steps of ribosome biogenesis. The protein is GTPase Der of Protochlamydia amoebophila (strain UWE25).